A 243-amino-acid chain; its full sequence is Chalcone--flavanone isomerase (243 aa).

3 residues coordinate substrate: Thr-50, Asn-115, and Ser-192.

It belongs to the chalcone isomerase family.

It carries out the reaction a chalcone = a flavanone.. It participates in secondary metabolite biosynthesis; flavonoid biosynthesis. Functionally, catalyzes the intramolecular cyclization of bicyclic chalcones into tricyclic (S)-flavanones. Responsible for the isomerization of 4,2',4',6'-tetrahydroxychalcone (also termed chalcone) into naringenin. This Ipomoea batatas (Sweet potato) protein is Chalcone--flavanone isomerase (CHI).